A 325-amino-acid polypeptide reads, in one-letter code: Glutarate 2-hydroxylase (325 aa).

Fe cation-binding residues include His-160, Asp-162, and His-292.

This sequence belongs to the glutarate hydroxylase family. Homotetramer. Fe(2+) is required as a cofactor.

The catalysed reaction is glutarate + 2-oxoglutarate + O2 = (S)-2-hydroxyglutarate + succinate + CO2. It functions in the pathway amino-acid degradation. In terms of biological role, acts as an alpha-ketoglutarate-dependent dioxygenase catalyzing hydroxylation of glutarate (GA) to L-2-hydroxyglutarate (L2HG). Functions in a L-lysine degradation pathway that proceeds via cadaverine, glutarate and L-2-hydroxyglutarate. The sequence is that of Glutarate 2-hydroxylase from Salmonella typhimurium (strain SL1344).